The sequence spans 80 residues: UPF0270 protein AHA_0994 (80 aa).

The protein belongs to the UPF0270 family.

The polypeptide is UPF0270 protein AHA_0994 (Aeromonas hydrophila subsp. hydrophila (strain ATCC 7966 / DSM 30187 / BCRC 13018 / CCUG 14551 / JCM 1027 / KCTC 2358 / NCIMB 9240 / NCTC 8049)).